Here is a 166-residue protein sequence, read N- to C-terminus: 2-C-methyl-D-erythritol 2,4-cyclodiphosphate synthase (166 aa).

A divalent metal cation-binding residues include Asp12 and His14. Residues 12 to 14 (DSH) and 38 to 39 (HS) contribute to the 4-CDP-2-C-methyl-D-erythritol 2-phosphate site. His46 contributes to the a divalent metal cation binding site. 4-CDP-2-C-methyl-D-erythritol 2-phosphate-binding positions include 60 to 62 (DIG), 65 to 69 (FPDTD), and Arg146.

Belongs to the IspF family. As to quaternary structure, homotrimer. The cofactor is a divalent metal cation.

The catalysed reaction is 4-CDP-2-C-methyl-D-erythritol 2-phosphate = 2-C-methyl-D-erythritol 2,4-cyclic diphosphate + CMP. The protein operates within isoprenoid biosynthesis; isopentenyl diphosphate biosynthesis via DXP pathway; isopentenyl diphosphate from 1-deoxy-D-xylulose 5-phosphate: step 4/6. Its function is as follows. Involved in the biosynthesis of isopentenyl diphosphate (IPP) and dimethylallyl diphosphate (DMAPP), two major building blocks of isoprenoid compounds. Catalyzes the conversion of 4-diphosphocytidyl-2-C-methyl-D-erythritol 2-phosphate (CDP-ME2P) to 2-C-methyl-D-erythritol 2,4-cyclodiphosphate (ME-CPP) with a corresponding release of cytidine 5-monophosphate (CMP). The sequence is that of 2-C-methyl-D-erythritol 2,4-cyclodiphosphate synthase from Gemmatimonas aurantiaca (strain DSM 14586 / JCM 11422 / NBRC 100505 / T-27).